Reading from the N-terminus, the 524-residue chain is Phosphoenolpyruvate carboxykinase (ATP) (524 aa).

Residues Arg-52, Tyr-188, and Lys-194 each contribute to the substrate site. Residues Lys-194, His-213, and 229–237 (GLSGTGKTT) each bind ATP. Mn(2+) contacts are provided by Lys-194 and His-213. Mn(2+) is bound at residue Asp-250. ATP is bound by residues Glu-278, Arg-314, and Thr-439. Arg-314 serves as a coordination point for substrate.

This sequence belongs to the phosphoenolpyruvate carboxykinase (ATP) family. Mn(2+) serves as cofactor.

It localises to the cytoplasm. It carries out the reaction oxaloacetate + ATP = phosphoenolpyruvate + ADP + CO2. It participates in carbohydrate biosynthesis; gluconeogenesis. Involved in the gluconeogenesis. Catalyzes the conversion of oxaloacetate (OAA) to phosphoenolpyruvate (PEP) through direct phosphoryl transfer between the nucleoside triphosphate and OAA. The polypeptide is Phosphoenolpyruvate carboxykinase (ATP) (Campylobacter jejuni subsp. jejuni serotype O:2 (strain ATCC 700819 / NCTC 11168)).